A 202-amino-acid polypeptide reads, in one-letter code: Ribosome maturation factor RimP (202 aa).

This sequence belongs to the RimP family.

It localises to the cytoplasm. Required for maturation of 30S ribosomal subunits. The protein is Ribosome maturation factor RimP of Polaromonas naphthalenivorans (strain CJ2).